The following is a 361-amino-acid chain: Cobalt-precorrin-5B C(1)-methyltransferase (361 aa).

Belongs to the CbiD family.

The enzyme catalyses Co-precorrin-5B + S-adenosyl-L-methionine = Co-precorrin-6A + S-adenosyl-L-homocysteine. It participates in cofactor biosynthesis; adenosylcobalamin biosynthesis; cob(II)yrinate a,c-diamide from sirohydrochlorin (anaerobic route): step 6/10. Functionally, catalyzes the methylation of C-1 in cobalt-precorrin-5B to form cobalt-precorrin-6A. The polypeptide is Cobalt-precorrin-5B C(1)-methyltransferase (Methanobrevibacter smithii (strain ATCC 35061 / DSM 861 / OCM 144 / PS)).